The following is a 103-amino-acid chain: Large ribosomal subunit protein bL21 (103 aa).

It belongs to the bacterial ribosomal protein bL21 family. In terms of assembly, part of the 50S ribosomal subunit. Contacts protein L20.

This protein binds to 23S rRNA in the presence of protein L20. The protein is Large ribosomal subunit protein bL21 of Glaesserella parasuis serovar 5 (strain SH0165) (Haemophilus parasuis).